We begin with the raw amino-acid sequence, 1030 residues long: MANLLQNPDIYGDRILFTCCDELWEYSLSTGEKKRLTSHLGVVNNARYYDNGTKVVFRVMFGQSLDAADLFSIDLKSGELKRLTFITGKSVGRRKFTDVAGFSKDGSIIVSTDAFQPFSVPMLYKLGDDGSLDPLNLGPAVHYIEKNGRIYIGRDTYDLPHWKEYKGGTRGKIWSGTIEKGFKKIIDLENHISCPVIVKDRIYFITDIDGAGNIYSTNLDGNDLKKHTDFHEYYPRHLNTDGKTIVFSMGGDIYTFDPTNDNVKSLDIGPVFDTDLNQSYAPSKFLEDFSMSPGDMYSTVSRGKAFIFNENVNYSIPVKSDGRVRYSRFLSKNEISLVIGDKDGDSIGVFDAGTGEMKRKIGPLGNIFSVKSSADGKYLVVGNDNFQILLIDVSNGTVKEIDQSREGLIVDFAISKDSRFIAYSFPVKSSDLASYVQRHIKLFDMLNDKHYDVTTETANDFAPAFDADTNYLYYLSNRSLDPSTDRFTFNFGYLNITRPFVVPLKKGYVSPARNMPQDIEPEKGEYDLERLKYISEPLPVDQADYRSITPLKDGVLLFSVPIHGEFSSYYSGQPEKGIIVKFEFKDKKVKEIKKEVVDFKISTDGSKIMFSKQDGKLYTFRMEKPEEEKSLNIDAITIVSNVKEDFAEMYDEAWKLARDNYWDKEHALTISEKIYERYRKLVERCVTRWDLSYLITEIQGEYRTSHSYEMGGYFTDIDMPRAGRIACDFKYSNGEYVISDILYGDPSNENEKSPFLLSTLDADIGDAVIEIDGIPIGKGKSIYEALVGKGNRSVLVKIRKKDNSVRSGFVDVLQDDRYIRYRAWVEKNKKFVHERTNGRIGYIHIPDMGIMGLNEFYRQYVTEASRNGLIVDVRFNGGGFVSQLILEKLYMKRLGYDNPRRGTLEPYPMNSIEGPMIAITNEYAGSDGDIFSYSFKALHLGTLIGTRTWGGVVGISPRRKLIDGTVLSQPEYAFWFKGSGFSVENYGVDPDVVIEYPPEMYNVNVDPQLERAIEMVLADLEKYKIELPKK.

The six-bladed beta propeller stretch occupies residues 1 to 270 (MANLLQNPDI…DNVKSLDIGP (270 aa)). The tract at residues 93–94 (RR) is binds the substrate's C-terminus. The tract at residues 286-635 (LEDFSMSPGD…EEEKSLNIDA (350 aa)) is seven-bladed beta propeller. A C-1 region spans residues 641–712 (NVKEDFAEMY…RTSHSYEMGG (72 aa)). Residue histidine 706 is the Charge relay system of the active site. The interval 721 to 816 (RAGRIACDFK…SGFVDVLQDD (96 aa)) is PDZ-like. Residues 817–1022 (RYIRYRAWVE…IEMVLADLEK (206 aa)) form a C-2 region. Substrate is bound at residue 877-879 (GGG). Catalysis depends on serine 926, which acts as the Nucleophile. Substrate is bound at residue 954-956 (GIS). Catalysis depends on glutamate 984, which acts as the Charge relay system.

This sequence belongs to the peptidase S41B family. As to quaternary structure, part of the tricorn proteolytic complex.

It localises to the cytoplasm. Functionally, tricorn degrades oligopeptides in a sequential manner. The sequence is that of Tricorn protease (tri) from Thermoplasma volcanium (strain ATCC 51530 / DSM 4299 / JCM 9571 / NBRC 15438 / GSS1).